The following is a 487-amino-acid chain: Glutamyl-tRNA(Gln) amidotransferase subunit A (487 aa).

Active-site charge relay system residues include Lys-75 and Ser-150. Ser-174 acts as the Acyl-ester intermediate in catalysis.

The protein belongs to the amidase family. GatA subfamily. In terms of assembly, heterotrimer of A, B and C subunits.

It carries out the reaction L-glutamyl-tRNA(Gln) + L-glutamine + ATP + H2O = L-glutaminyl-tRNA(Gln) + L-glutamate + ADP + phosphate + H(+). Allows the formation of correctly charged Gln-tRNA(Gln) through the transamidation of misacylated Glu-tRNA(Gln) in organisms which lack glutaminyl-tRNA synthetase. The reaction takes place in the presence of glutamine and ATP through an activated gamma-phospho-Glu-tRNA(Gln). The polypeptide is Glutamyl-tRNA(Gln) amidotransferase subunit A (Syntrophomonas wolfei subsp. wolfei (strain DSM 2245B / Goettingen)).